We begin with the raw amino-acid sequence, 397 residues long: Glycine betaine/carnitine transport ATP-binding protein GbuA (397 aa).

The ABC transporter domain maps to 28-264; it reads KSKTDILKET…PANEYVEKFI (237 aa). Position 60 to 67 (60 to 67) interacts with ATP; sequence GLSGSGKS. CBS domains follow at residues 279–335 and 340–395; these read MIRP…NITS and LHRD…EVNV.

This sequence belongs to the ABC transporter superfamily. The complex is composed of two ATP-binding proteins (GbuA), two transmembrane proteins (GbuB) and a solute-binding protein (GbuC).

It carries out the reaction a quaternary ammonium(out) + ATP + H2O = a quaternary ammonium(in) + ADP + phosphate + H(+). Its activity is regulated as follows. The complex is activated by an osmotic gradient or by low temperature. Its function is as follows. Part of the ABC transporter complex GbuABC involved in glycine betaine uptake. Responsible for energy coupling to the transport system. Involved, with BetL and OpuC, in osmoprotection and cryoprotection of Listeria. Can also uptake carnitine when carnitine is abundant in the growth medium. The sequence is that of Glycine betaine/carnitine transport ATP-binding protein GbuA (gbuA) from Listeria monocytogenes serotype 1/2a (strain 10403S).